Here is a 253-residue protein sequence, read N- to C-terminus: Decarboxylase DEC1 (253 aa).

Lysine 121 functions as the Schiff-base intermediate with acetoacetate in the catalytic mechanism.

This sequence belongs to the ADC family.

The protein operates within mycotoxin biosynthesis. In terms of biological role, decarboxylase; part of the Tox1B locus, one of the 2 loci that mediate the biosynthesis of T-toxin, a family of linear polyketides 37 to 45 carbons in length, of which the major component is 41 carbons, and which leads to high virulence to maize. One of the PKSs (PKS1 or PKS2) could synthesize a precursor, used subsequently by the other PKS as starter unit, to add additional carbons. Variability in the length of the final carbon backbone C35-47 could be achieved by varying the number of condensation cycles, or use of different starter or extender units or might be due to decarboxylation of the penultimate product, catalyzed by DEC1. Additional proteins are required for the biosynthesis of T-toxin, including oxidoreductases RED1, RED2, RED3, LAM1 and OXI1, as well as esterase TOX9. In Cochliobolus heterostrophus (strain C4 / ATCC 48331 / race T) (Southern corn leaf blight fungus), this protein is Decarboxylase DEC1.